The chain runs to 264 residues: Glutamate racemase (264 aa).

Substrate contacts are provided by residues 10-11 (DS) and 42-43 (YG). Cysteine 73 functions as the Proton donor/acceptor in the catalytic mechanism. Residue 74-75 (NT) coordinates substrate. The active-site Proton donor/acceptor is the cysteine 183. 184–185 (TH) lines the substrate pocket.

It belongs to the aspartate/glutamate racemases family.

It catalyses the reaction L-glutamate = D-glutamate. It functions in the pathway cell wall biogenesis; peptidoglycan biosynthesis. Functionally, provides the (R)-glutamate required for cell wall biosynthesis. The polypeptide is Glutamate racemase (Streptococcus pyogenes serotype M3 (strain ATCC BAA-595 / MGAS315)).